The primary structure comprises 342 residues: S-adenosylmethionine:tRNA ribosyltransferase-isomerase (342 aa).

The protein belongs to the QueA family. As to quaternary structure, monomer.

It localises to the cytoplasm. It carries out the reaction 7-aminomethyl-7-carbaguanosine(34) in tRNA + S-adenosyl-L-methionine = epoxyqueuosine(34) in tRNA + adenine + L-methionine + 2 H(+). The protein operates within tRNA modification; tRNA-queuosine biosynthesis. In terms of biological role, transfers and isomerizes the ribose moiety from AdoMet to the 7-aminomethyl group of 7-deazaguanine (preQ1-tRNA) to give epoxyqueuosine (oQ-tRNA). This chain is S-adenosylmethionine:tRNA ribosyltransferase-isomerase, found in Bacillus pumilus (strain SAFR-032).